The sequence spans 66 residues: Beta-mammal toxin Cv1 (66 aa).

Residues 1–66 (KEGYIVNLST…VWPLPKKTCN (66 aa)) form the LCN-type CS-alpha/beta domain. 4 disulfides stabilise this stretch: cysteine 12–cysteine 65, cysteine 16–cysteine 41, cysteine 25–cysteine 46, and cysteine 29–cysteine 48.

In terms of tissue distribution, expressed by the venom gland.

The protein resides in the secreted. Is susceptible to be neutralized by human antibodies scFvs 10FG2 and HV. Beta toxins bind voltage-independently at site-4 of sodium channels (Nav) and reduces peak current and shifts the voltage of activation toward more negative potentials thereby affecting sodium channel activation and promoting spontaneous and repetitive firing. This toxin is slightly toxic to mice. The polypeptide is Beta-mammal toxin Cv1 (Centruroides villegasi (Scorpion)).